The following is a 170-amino-acid chain: Cyclic pyranopterin monophosphate synthase (170 aa).

Residues 75–77 (MCH) and 115–116 (ME) each bind substrate. The active site involves D130.

Belongs to the MoaC family. In terms of assembly, homohexamer; trimer of dimers.

It carries out the reaction (8S)-3',8-cyclo-7,8-dihydroguanosine 5'-triphosphate = cyclic pyranopterin phosphate + diphosphate. Its pathway is cofactor biosynthesis; molybdopterin biosynthesis. Functionally, catalyzes the conversion of (8S)-3',8-cyclo-7,8-dihydroguanosine 5'-triphosphate to cyclic pyranopterin monophosphate (cPMP). The polypeptide is Cyclic pyranopterin monophosphate synthase (Bacillus subtilis (strain 168)).